We begin with the raw amino-acid sequence, 767 residues long: Cadherin-5 (767 aa).

A signal peptide spans methionine 1–glycine 29. A propeptide spanning residues valine 30–arginine 51 is cleaved from the precursor. Residues valine 30 to serine 593 are Extracellular-facing. Ca(2+) contacts are provided by glutamate 62, glutamate 63, aspartate 113, and glutamate 115. 5 Cadherin domains span residues arginine 86–phenylalanine 155, phenylalanine 155–phenylalanine 261, lysine 262–phenylalanine 373, asparagine 374–leucine 475, and leucine 475–tyrosine 581. Residue asparagine 121 is glycosylated (N-linked (GlcNAc...) asparagine). The Ca(2+) site is built by aspartate 147, isoleucine 148, asparagine 149, aspartate 150, asparagine 151, aspartate 180, and aspartate 182. The N-linked (GlcNAc...) asparagine glycan is linked to asparagine 197. Residue aspartate 233 participates in Ca(2+) binding. N-linked (GlcNAc...) asparagine glycans are attached at residues asparagine 374, asparagine 477, and asparagine 518. A helical membrane pass occupies residues alanine 594–leucine 614. Residues arginine 615–tyrosine 767 lie on the Cytoplasmic side of the membrane.

It localises to the cell membrane. It is found in the cell junction. Its subcellular location is the adherens junction. Its function is as follows. Cadherins are calcium-dependent cell adhesion proteins. They preferentially interact with themselves in a homophilic manner in connecting cells; cadherins may thus contribute to the sorting of heterogeneous cell types. Required for embryonic cardiac looping and heart chamber development, via promotion of cell-cell junction formation and subsequent attachment between the endothelial and myocardial layers of the heart. Required for the directional migration and delamination of endothelial cell monolayers, by which common cardinal veins form via the lumen ensheathment mechanism of vessel development as they migrate and connect with the heart inflow tract. Required for the formation of filopodia extensions (sprouts) at the initiation of intersegmental vessel development, by acting (via its C-terminus) to facilitate anchoring of the actin cytoskeleton to cell junctions in endothelial cells. Then positively regulates dorsal migration of stalk cells and sprout outgrowth towards the dorsal longitudinal anastomotic vessels (DLAV) via endothelial cell elongation. Following contact with the DLAV, required for intersegmental vessel lumen formation, potentially via facilitating the formation and/or extension of endothelial cell tight junctions that are required during tubulogenesis. The chain is Cadherin-5 from Danio rerio (Zebrafish).